The primary structure comprises 216 residues: U1 small nuclear ribonucleoprotein A (216 aa).

RRM domains follow at residues 7-86 (QTIY…YSKS) and 142-216 (QILF…FAKK). The disordered stretch occupies residues 97–142 (TFKERPKKVKPPKPAPGTDEKKDKKKKPSSAENSNPNAQTEQPPNQ). Residues 126 to 142 (SAENSNPNAQTEQPPNQ) show a composition bias toward polar residues.

The protein belongs to the RRM U1 A/B'' family. In terms of assembly, belongs to the spliceosome where it is associated with snRNP U1. Interacts with the SMN complex.

It localises to the nucleus. In terms of biological role, binds stem loop II of U1 snRNA. It is the first snRNP to interact with pre-mRNA. This interaction is required for the subsequent binding of U2 snRNP and the U4/U6/U5 tri-snRNP. Plays a role in regulating sex-lethal splicing. The polypeptide is U1 small nuclear ribonucleoprotein A (snf) (Drosophila melanogaster (Fruit fly)).